Here is a 275-residue protein sequence, read N- to C-terminus: Ribosomal RNA small subunit methyltransferase A (275 aa).

The S-adenosyl-L-methionine site is built by asparagine 28, leucine 30, glycine 55, glutamate 77, aspartate 103, and asparagine 123.

It belongs to the class I-like SAM-binding methyltransferase superfamily. rRNA adenine N(6)-methyltransferase family. RsmA subfamily.

The protein resides in the cytoplasm. It carries out the reaction adenosine(1518)/adenosine(1519) in 16S rRNA + 4 S-adenosyl-L-methionine = N(6)-dimethyladenosine(1518)/N(6)-dimethyladenosine(1519) in 16S rRNA + 4 S-adenosyl-L-homocysteine + 4 H(+). Its function is as follows. Specifically dimethylates two adjacent adenosines (A1518 and A1519) in the loop of a conserved hairpin near the 3'-end of 16S rRNA in the 30S particle. May play a critical role in biogenesis of 30S subunits. This Rhizobium johnstonii (strain DSM 114642 / LMG 32736 / 3841) (Rhizobium leguminosarum bv. viciae) protein is Ribosomal RNA small subunit methyltransferase A.